Consider the following 170-residue polypeptide: Small ribosomal subunit protein mS25 (170 aa).

This sequence belongs to the mitochondrion-specific ribosomal protein mS25 family. As to quaternary structure, component of the mitochondrial ribosome small subunit (28S) which comprises a 12S rRNA and about 30 distinct proteins.

It is found in the mitochondrion. The protein is Small ribosomal subunit protein mS25 (mrps-25) of Caenorhabditis elegans.